We begin with the raw amino-acid sequence, 118 residues long: Fluoride-specific ion channel FluC 1 (118 aa).

4 helical membrane-spanning segments follow: residues 5–25, 39–59, 61–81, and 98–118; these read FLLV…ISIF, FFIN…ALGP, WQLF…TFKV, and YVGL…MLGV. Na(+) contacts are provided by Gly-71 and Thr-74.

It belongs to the fluoride channel Fluc/FEX (TC 1.A.43) family.

The protein localises to the cell membrane. It carries out the reaction fluoride(in) = fluoride(out). Na(+) is not transported, but it plays an essential structural role and its presence is essential for fluoride channel function. Fluoride-specific ion channel. Important for reducing fluoride concentration in the cell, thus reducing its toxicity. This is Fluoride-specific ion channel FluC 1 from Listeria innocua serovar 6a (strain ATCC BAA-680 / CLIP 11262).